Reading from the N-terminus, the 262-residue chain is Hydroxyethylthiazole kinase (262 aa).

M50 lines the substrate pocket. ATP is bound by residues R125 and T171. G198 is a substrate binding site.

This sequence belongs to the Thz kinase family. Mg(2+) is required as a cofactor.

The enzyme catalyses 5-(2-hydroxyethyl)-4-methylthiazole + ATP = 4-methyl-5-(2-phosphooxyethyl)-thiazole + ADP + H(+). It functions in the pathway cofactor biosynthesis; thiamine diphosphate biosynthesis; 4-methyl-5-(2-phosphoethyl)-thiazole from 5-(2-hydroxyethyl)-4-methylthiazole: step 1/1. Its function is as follows. Catalyzes the phosphorylation of the hydroxyl group of 4-methyl-5-beta-hydroxyethylthiazole (THZ). The polypeptide is Hydroxyethylthiazole kinase (Escherichia coli O6:K15:H31 (strain 536 / UPEC)).